A 194-amino-acid polypeptide reads, in one-letter code: uncharacterized protein (194 aa).

The Exonuclease domain occupies 20–185; that stretch reads RIFIDTETTG…ADCRMTLGII (166 aa).

This is an uncharacterized protein from Escherichia coli (Bacteriophage 186).